The chain runs to 458 residues: Ammonium transporter Rh type B (458 aa).

Over methionine 1 to lysine 11 the chain is Cytoplasmic. A helical membrane pass occupies residues leucine 12 to glutamine 32. The Extracellular portion of the chain corresponds to tyrosine 33–tyrosine 58. The N-linked (GlcNAc...) asparagine glycan is linked to asparagine 44. The helical transmembrane segment at proline 59–leucine 79 threads the bilayer. The Cytoplasmic segment spans residues glutamine 80–glycine 83. A helical transmembrane segment spans residues phenylalanine 84–methionine 104. Topologically, residues glutamine 105 to glutamate 121 are extracellular. The chain crosses the membrane as a helical span at residues serine 122 to glycine 142. Residues lysine 143 to threonine 151 lie on the Cytoplasmic side of the membrane. The chain crosses the membrane as a helical span at residues methionine 152 to glycine 172. Over threonine 173–alanine 176 the chain is Extracellular. A helical membrane pass occupies residues glycine 177 to leucine 197. Topologically, residues tyrosine 198–aspartate 216 are cytoplasmic. A helical transmembrane segment spans residues leucine 217–isoleucine 237. The Extracellular portion of the chain corresponds to threonine 238–threonine 247. The helical transmembrane segment at alanine 248–serine 270 threads the bilayer. At histidine 271–lysine 274 the chain is on the cytoplasmic side. A helical membrane pass occupies residues leucine 275–glycine 295. Residues glutamate 296 to methionine 298 lie on the Extracellular side of the membrane. Residues leucine 299–phenylalanine 319 form a helical membrane-spanning segment. Residues lysine 320–asparagine 340 are Cytoplasmic-facing. A helical membrane pass occupies residues leucine 341 to threonine 361. Over threonine 362 to alanine 391 the chain is Extracellular. Residues leucine 392–leucine 412 form a helical membrane-spanning segment. At lysine 413–serine 458 the chain is on the cytoplasmic side. The disordered stretch occupies residues glycine 436–serine 458. Positions lysine 449–serine 458 are enriched in basic and acidic residues.

This sequence belongs to the ammonium transporter (TC 2.A.49) family. Rh subfamily. In terms of tissue distribution, specifically expressed in the gill by pavement cells (at protein level).

The protein resides in the apicolateral cell membrane. The protein localises to the cytoplasmic vesicle membrane. In terms of biological role, functions as an ammonia transporter. May play a role in the elimination of ammonia in the gill. The chain is Ammonium transporter Rh type B (rhbg) from Takifugu rubripes (Japanese pufferfish).